The chain runs to 703 residues: Glycogen [starch] synthase, liver (703 aa).

Phosphoserine; by PKA is present on Ser-8. Ser-11 carries the phosphoserine modification. Position 40 (Lys-40) interacts with UDP. His-205 and Arg-211 together coordinate UDP-alpha-D-glucose. The alpha-D-glucose 6-phosphate site is built by His-291, Glu-292, Gln-294, His-297, and Lys-301. Arg-331 is a UDP binding site. Arg-331 provides a ligand contact to UDP-alpha-D-glucose. His-501 contacts alpha-D-glucose 6-phosphate. UDP-alpha-D-glucose is bound by residues Glu-510, Trp-512, and Gly-513. Thr-515 provides a ligand contact to UDP. Alpha-D-glucose 6-phosphate is bound by residues Arg-582 and Arg-586. A Phosphoserine modification is found at Ser-627. Residues 628 to 703 (PPTTEGFKYP…KKKLHGEYKN (76 aa)) form a disordered region. Residues Ser-641, Ser-645, Ser-649, and Ser-653 each carry the phosphoserine; by GSK3-alpha and GSK3-beta modification. A compositionally biased stretch (low complexity) spans 647 to 657 (SGSQASSPQSS). Ser-657 bears the Phosphoserine; by CK2 mark. The span at 658-674 (DVEDEVEDERYDEEEEA) shows a compositional bias: acidic residues. Ser-683 bears the Phosphoserine mark.

This sequence belongs to the glycosyltransferase 3 family. Part of the glycogen synthase (GS)-glycogenin complex, a heterooctamer composed of a tetramer of GS and 2 dimers of glycogenin, where each GS protomer binds to one glycogenin subunit (via glycogenin C-terminus); the GS tetramer may dissociate from glycogenin dimers to continue glycogen polymerization on its own. May also form a heterooctamer complex with GYG1 (via GYG1 C-terminus). Primed phosphorylation at Ser-657 (site 5) by CSNK2A1 and CSNK2A2 is required for inhibitory phosphorylation at Ser-641 (site 3a), Ser-645 (site 3b), Ser-649 (site 3c) and Ser-653 (site 4) by GSK3A an GSK3B. Dephosphorylation at Ser-641 and Ser-645 by PP1 activates the enzyme. Phosphorylation at Ser-8 is not required for interaction with GYG1. Interaction with GYG1 does not regulate the phosphorylation at Ser-8 and Ser-641. Specifically expressed in liver (at protein level).

The enzyme catalyses [(1-&gt;4)-alpha-D-glucosyl](n) + UDP-alpha-D-glucose = [(1-&gt;4)-alpha-D-glucosyl](n+1) + UDP + H(+). Its pathway is glycan biosynthesis; glycogen biosynthesis. With respect to regulation, allosteric activation by glucose-6-phosphate. Phosphorylation reduces the activity towards UDP-glucose. When in the non-phosphorylated state, glycogen synthase does not require glucose-6-phosphate as an allosteric activator; when phosphorylated it does. Its function is as follows. Glycogen synthase participates in the glycogen biosynthetic process along with glycogenin and glycogen branching enzyme. Extends the primer composed of a few glucose units formed by glycogenin by adding new glucose units to it. In this context, glycogen synthase transfers the glycosyl residue from UDP-Glc to the non-reducing end of alpha-1,4-glucan. This chain is Glycogen [starch] synthase, liver, found in Homo sapiens (Human).